Here is a 134-residue protein sequence, read N- to C-terminus: Putative nickel-responsive regulator (134 aa).

His78, His89, His91, and Cys97 together coordinate Ni(2+).

The protein belongs to the transcriptional regulatory CopG/NikR family. Ni(2+) serves as cofactor.

Functionally, transcriptional regulator. The protein is Putative nickel-responsive regulator of Chlorobium phaeobacteroides (strain DSM 266 / SMG 266 / 2430).